We begin with the raw amino-acid sequence, 194 residues long: Putative manganese efflux pump MntP (194 aa).

6 consecutive transmembrane segments (helical) span residues 6–26, 35–55, 66–86, 109–129, 142–162, and 174–194; these read LILVAVALGTDAFSLATGLAL, WLFAGTVGLFHIFMPLAGLYL, VAAIIGALVLATMGTLMLWEA, GVLGGVMAILFMAGSVSLDAL, VPLTVLTMGFIAATMTALGLL, and RAELAGGLILVAIGLKMLVGV.

The protein belongs to the MntP (TC 9.B.29) family.

Its subcellular location is the cell membrane. In terms of biological role, probably functions as a manganese efflux pump. The sequence is that of Putative manganese efflux pump MntP from Moorella thermoacetica (strain ATCC 39073 / JCM 9320).